The primary structure comprises 605 residues: MALPACAVREFEPPRQPERGAPVRTTCPRRHSRVEAELAASRPGSVAASVRAGPPRGVSHGFHTRPLLDKPRKASSSLAGAACAPLFALLSRGRRRRMHVLRRRWDLGSLCRALLTRGLAALGHSLKHVLGAIFSKIFGPMASVGNMDEKSNKLLLALVMLFLFAVIVLQYVCPGTECQLLRLQAFSSPVPDPYRSEDESSARFVPRYNFTRGDLLRKVDFDIKGDDLIVFLHIQKTGGTTFGRHLVRNIQLEQPCECRVGQKKCTCHRPGKRETWLFSRFSTGWSCGLHADWTELTSCVPSVVDGKRDARLRPSRNFHYITILRDPVSRYLSEWRHVQRGATWKASLHVCDGRPPTSEELPSCYTGDDWSGCPLKEFMDCPYNLANNRQVRMLSDLTLVGCYNLSVMPEKQRNKVLLESAKSNLKHMAFFGLTEFQRKTQYLFEKTFNMNFISPFTQYNTTRASSVEINEEIQKRIEGLNFLDMELYSYAKDLFLQRYQFMRQKEHQEARRKRQEQRKFLKGRLLQTHFQSQGQGQSQNPNQNQSQNPNPNANQNLTQNLMQNLTQSLSQKENRESPKQNSGKEQNDNTSNGTNDYIGSVEKWR.

At 1-4 the chain is on the cytoplasmic side; that stretch reads MALP. Residues 1 to 66 are disordered; sequence MALPACAVRE…GVSHGFHTRP (66 aa). Residues 5-27 form a helical; Signal-anchor for type II membrane protein membrane-spanning segment; that stretch reads ACAVREFEPPRQPERGAPVRTTC. Residues 9 to 18 are compositionally biased toward basic and acidic residues; that stretch reads REFEPPRQPE. The Lumenal portion of the chain corresponds to 28-605; sequence PRRHSRVEAE…DYIGSVEKWR (578 aa). A glycan (N-linked (GlcNAc...) asparagine) is linked at N209. 233–241 is a binding site for 3'-phosphoadenylyl sulfate; sequence HIQKTGGTT. Substrate-binding positions include 263–264, R280, W285, and H290; that span reads KK. Residue H290 is the Proton acceptor of the active site. 3'-phosphoadenylyl sulfate-binding residues include R325 and S333. Positions 337 and 344 each coordinate substrate. Residue N404 is glycosylated (N-linked (GlcNAc...) asparagine). 457-459 contacts 3'-phosphoadenylyl sulfate; it reads TQY. N-linked (GlcNAc...) asparagine glycosylation occurs at N460. 463 to 464 serves as a coordination point for 3'-phosphoadenylyl sulfate; sequence RA. The disordered stretch occupies residues 530–605; sequence FQSQGQGQSQ…DYIGSVEKWR (76 aa). Residues 531–571 show a composition bias toward low complexity; it reads QSQGQGQSQNPNQNQSQNPNPNANQNLTQNLMQNLTQSLSQ. Residues N544, N556, N564, N589, and N592 are each glycosylated (N-linked (GlcNAc...) asparagine). Residues 579–597 are compositionally biased toward polar residues; the sequence is KQNSGKEQNDNTSNGTNDY.

This sequence belongs to the sulfotransferase 6 family.

Its subcellular location is the membrane. It carries out the reaction alpha-D-glucosaminyl-[heparan sulfate](n) + 3'-phosphoadenylyl sulfate = 6-sulfo-alpha-D-glucosaminyl-[heparan sulfate](n) + adenosine 3',5'-bisphosphate + H(+). Functionally, 6-O-sulfation enzyme which catalyzes the transfer of sulfate from 3'-phosphoadenosine 5'-phosphosulfate (PAPS) to position 6 of the N-sulfoglucosamine residue (GlcNS) of heparan sulfate. The sequence is that of Heparan-sulfate 6-O-sulfotransferase 2 from Homo sapiens (Human).